Reading from the N-terminus, the 600-residue chain is Aspartate--tRNA(Asp/Asn) ligase (600 aa).

E187 is a binding site for L-aspartate. Residues 211–214 (QIFK) are aspartate. The L-aspartate site is built by R233 and H463. Position 233 to 235 (233 to 235 (RDE)) interacts with ATP. Residue E497 coordinates ATP. Residue R504 participates in L-aspartate binding. 549–552 (GVDR) lines the ATP pocket.

It belongs to the class-II aminoacyl-tRNA synthetase family. Type 1 subfamily. In terms of assembly, homodimer.

It is found in the cytoplasm. The catalysed reaction is tRNA(Asx) + L-aspartate + ATP = L-aspartyl-tRNA(Asx) + AMP + diphosphate. Functionally, aspartyl-tRNA synthetase with relaxed tRNA specificity since it is able to aspartylate not only its cognate tRNA(Asp) but also tRNA(Asn). Reaction proceeds in two steps: L-aspartate is first activated by ATP to form Asp-AMP and then transferred to the acceptor end of tRNA(Asp/Asn). The polypeptide is Aspartate--tRNA(Asp/Asn) ligase (Wolbachia pipientis subsp. Culex pipiens (strain wPip)).